The primary structure comprises 565 residues: 2-isopropylmalate synthase (565 aa).

The 276-residue stretch at P37 to D312 folds into the Pyruvate carboxyltransferase domain. Mg(2+) is bound by residues D46, H251, H253, and N287. Residues E446 to S565 form a regulatory domain region.

The protein belongs to the alpha-IPM synthase/homocitrate synthase family. LeuA type 2 subfamily. As to quaternary structure, homodimer. It depends on Mg(2+) as a cofactor.

The protein localises to the cytoplasm. The catalysed reaction is 3-methyl-2-oxobutanoate + acetyl-CoA + H2O = (2S)-2-isopropylmalate + CoA + H(+). The protein operates within amino-acid biosynthesis; L-leucine biosynthesis; L-leucine from 3-methyl-2-oxobutanoate: step 1/4. Functionally, catalyzes the condensation of the acetyl group of acetyl-CoA with 3-methyl-2-oxobutanoate (2-ketoisovalerate) to form 3-carboxy-3-hydroxy-4-methylpentanoate (2-isopropylmalate). The sequence is that of 2-isopropylmalate synthase from Parafrankia sp. (strain EAN1pec).